The chain runs to 263 residues: Small ribosomal subunit protein eS4, Y isoform 1 (263 aa).

The region spanning 42-104 (LPLIIFLRNR…TGEHFRLVYD (63 aa)) is the S4 RNA-binding domain.

It belongs to the eukaryotic ribosomal protein eS4 family.

The polypeptide is Small ribosomal subunit protein eS4, Y isoform 1 (RPS4Y1) (Monodelphis domestica (Gray short-tailed opossum)).